The following is a 492-amino-acid chain: Glycerol kinase (492 aa).

An ADP-binding site is contributed by Thr11. ATP is bound by residues Thr11 and Thr12. Residue Thr11 coordinates sn-glycerol 3-phosphate. Lys15 serves as a coordination point for ADP. Sn-glycerol 3-phosphate contacts are provided by Arg79, Glu80, Tyr129, and Asp238. Residues Arg79, Glu80, Tyr129, Asp238, and Gln239 each coordinate glycerol. 4 residues coordinate ADP: Thr260, Gly302, Gly403, and Asn407. ATP contacts are provided by Thr260, Gly302, and Gly403.

It belongs to the FGGY kinase family.

It catalyses the reaction glycerol + ATP = sn-glycerol 3-phosphate + ADP + H(+). Its pathway is polyol metabolism; glycerol degradation via glycerol kinase pathway; sn-glycerol 3-phosphate from glycerol: step 1/1. With respect to regulation, inhibited by fructose 1,6-bisphosphate (FBP). Its function is as follows. Key enzyme in the regulation of glycerol uptake and metabolism. Catalyzes the phosphorylation of glycerol to yield sn-glycerol 3-phosphate. The polypeptide is Glycerol kinase (Aquifex aeolicus (strain VF5)).